Consider the following 168-residue polypeptide: Phosphopantetheine adenylyltransferase (168 aa).

T9 lines the substrate pocket. ATP-binding positions include 9-10 (TF) and H17. Residues K41, L73, and R87 each coordinate substrate. Residues 88–90 (GLR), E98, and 123–129 (YQFISGT) contribute to the ATP site.

Belongs to the bacterial CoaD family. Homohexamer. It depends on Mg(2+) as a cofactor.

It is found in the cytoplasm. The enzyme catalyses (R)-4'-phosphopantetheine + ATP + H(+) = 3'-dephospho-CoA + diphosphate. The protein operates within cofactor biosynthesis; coenzyme A biosynthesis; CoA from (R)-pantothenate: step 4/5. Functionally, reversibly transfers an adenylyl group from ATP to 4'-phosphopantetheine, yielding dephospho-CoA (dPCoA) and pyrophosphate. The sequence is that of Phosphopantetheine adenylyltransferase from Paraburkholderia phymatum (strain DSM 17167 / CIP 108236 / LMG 21445 / STM815) (Burkholderia phymatum).